A 91-amino-acid polypeptide reads, in one-letter code: MDEIKYPVLTEKTIRLLEKNQYTFDVNKKSTKPQIKKWIENFFNVKVKAINSHIPPEKKKRIGPIIGHSVRYKRMIITLKTGYSIPLFSNK.

The protein belongs to the universal ribosomal protein uL23 family. In terms of assembly, part of the 50S ribosomal subunit.

It is found in the plastid. Its subcellular location is the chloroplast. Its function is as follows. Binds to 23S rRNA. This is Large ribosomal subunit protein uL23c (rpl23) from Physcomitrium patens (Spreading-leaved earth moss).